Here is a 430-residue protein sequence, read N- to C-terminus: Serine--tRNA ligase (430 aa).

235-237 (TAE) lines the L-serine pocket. ATP is bound by residues 266 to 268 (RRE) and Val-282. Residue Glu-289 coordinates L-serine. 353 to 356 (EASS) provides a ligand contact to ATP. Ser-389 contributes to the L-serine binding site.

This sequence belongs to the class-II aminoacyl-tRNA synthetase family. Type-1 seryl-tRNA synthetase subfamily. As to quaternary structure, homodimer. The tRNA molecule binds across the dimer.

Its subcellular location is the cytoplasm. The catalysed reaction is tRNA(Ser) + L-serine + ATP = L-seryl-tRNA(Ser) + AMP + diphosphate + H(+). The enzyme catalyses tRNA(Sec) + L-serine + ATP = L-seryl-tRNA(Sec) + AMP + diphosphate + H(+). It functions in the pathway aminoacyl-tRNA biosynthesis; selenocysteinyl-tRNA(Sec) biosynthesis; L-seryl-tRNA(Sec) from L-serine and tRNA(Sec): step 1/1. Catalyzes the attachment of serine to tRNA(Ser). Is also able to aminoacylate tRNA(Sec) with serine, to form the misacylated tRNA L-seryl-tRNA(Sec), which will be further converted into selenocysteinyl-tRNA(Sec). The chain is Serine--tRNA ligase from Chlorobium phaeovibrioides (strain DSM 265 / 1930) (Prosthecochloris vibrioformis (strain DSM 265)).